A 137-amino-acid polypeptide reads, in one-letter code: Putative nickel-responsive regulator (137 aa).

Positions 79, 90, 92, and 98 each coordinate Ni(2+).

The protein belongs to the transcriptional regulatory CopG/NikR family. Ni(2+) is required as a cofactor.

Functionally, transcriptional regulator. The sequence is that of Putative nickel-responsive regulator from Campylobacter concisus (strain 13826).